A 188-amino-acid chain; its full sequence is Large ribosomal subunit protein bL35m (188 aa).

Belongs to the bacterial ribosomal protein bL35 family. Component of the mitochondrial large ribosomal subunit (mt-LSU). Mature mammalian 55S mitochondrial ribosomes consist of a small (28S) and a large (39S) subunit. The 28S small subunit contains a 12S ribosomal RNA (12S mt-rRNA) and 30 different proteins. The 39S large subunit contains a 16S rRNA (16S mt-rRNA), a copy of mitochondrial valine transfer RNA (mt-tRNA(Val)), which plays an integral structural role, and 52 different proteins.

The protein localises to the mitochondrion. The polypeptide is Large ribosomal subunit protein bL35m (MRPL35) (Homo sapiens (Human)).